The sequence spans 296 residues: Ribosomal RNA small subunit methyltransferase H (296 aa).

S-adenosyl-L-methionine is bound by residues G38 to H40, E57, F80, D103, and H110.

This sequence belongs to the methyltransferase superfamily. RsmH family.

Its subcellular location is the cytoplasm. The catalysed reaction is cytidine(1402) in 16S rRNA + S-adenosyl-L-methionine = N(4)-methylcytidine(1402) in 16S rRNA + S-adenosyl-L-homocysteine + H(+). Functionally, specifically methylates the N4 position of cytidine in position 1402 (C1402) of 16S rRNA. In Borreliella burgdorferi (strain ATCC 35210 / DSM 4680 / CIP 102532 / B31) (Borrelia burgdorferi), this protein is Ribosomal RNA small subunit methyltransferase H.